We begin with the raw amino-acid sequence, 250 residues long: 26S proteasome non-ATPase regulatory subunit 8 (250 aa).

The PCI domain occupies 63–233; that stretch reads HDFETFDDYI…QEKPVNLDTV (171 aa).

The protein belongs to the proteasome subunit S14 family.

In terms of biological role, acts as a regulatory subunit of the 26S proteasome which is involved in the ATP-dependent degradation of ubiquitinated proteins. The polypeptide is 26S proteasome non-ATPase regulatory subunit 8 (Caenorhabditis elegans).